A 140-amino-acid chain; its full sequence is Putative pre-16S rRNA nuclease (140 aa).

This sequence belongs to the YqgF nuclease family.

It localises to the cytoplasm. Could be a nuclease involved in processing of the 5'-end of pre-16S rRNA. This chain is Putative pre-16S rRNA nuclease, found in Serratia proteamaculans (strain 568).